We begin with the raw amino-acid sequence, 21 residues long: Ferredoxin (21 aa).

In terms of domain architecture, 4Fe-4S ferredoxin-type spans 2–21 (KVKVDADACIGCGVCVELCP). Residues Cys10, Cys13, and Cys16 each coordinate [4Fe-4S] cluster.

Monomer. [4Fe-4S] cluster is required as a cofactor.

Its function is as follows. Ferredoxins are iron-sulfur proteins that transfer electrons in a wide variety of metabolic reactions. The sequence is that of Ferredoxin (fdxA) from Pyrococcus woesei.